A 459-amino-acid polypeptide reads, in one-letter code: Interleukin-7 receptor subunit alpha (459 aa).

A signal peptide spans 1–20; it reads MTILGTTFGMVFSLLQVVSG. At 21–239 the chain is on the extracellular side; that stretch reads ESGYAQNGDL…EINNSSGEMD (219 aa). Cysteines 42 and 57 form a disulfide. Asn49 and Asn65 each carry an N-linked (GlcNAc...) asparagine glycan. Intrachain disulfides connect Cys74/Cys82 and Cys108/Cys118. Positions 131 to 231 constitute a Fibronectin type-III domain; sequence APFDLSVVYR…PSYYFRTPEI (101 aa). 2 N-linked (GlcNAc...) asparagine glycosylation sites follow: Asn151 and Asn182. The WSXWS motif signature appears at 217-221; the sequence is WSEWS. 2 N-linked (GlcNAc...) asparagine glycosylation sites follow: Asn232 and Asn233. Residues 240 to 264 form a helical membrane-spanning segment; the sequence is PILLTISILSFFSVALLVILACVLW. At 265-459 the chain is on the cytoplasmic side; that stretch reads KKRIKPIVWP…VTMSSFYQNQ (195 aa). Residues 272–280 carry the Box 1 motif motif; it reads VWPSLPDHK. Thr282 is modified (phosphothreonine; by PKC).

It belongs to the type I cytokine receptor family. Type 4 subfamily. In terms of assembly, the IL7 receptor is a heterodimer of IL7R and IL2RG. The TSLP receptor is a heterodimer of CRLF2 and IL7R. Interacts with CD53. N-glycosylated IL-7Ralpha binds IL7 300-fold more tightly than the unglycosylated form. In terms of processing, ubiquitinated by MARCHF8; leading to lysosomal degradation.

It is found in the cell membrane. The protein localises to the secreted. Functionally, receptor for interleukin-7. Also acts as a receptor for thymic stromal lymphopoietin (TSLP). The sequence is that of Interleukin-7 receptor subunit alpha (IL7R) from Homo sapiens (Human).